We begin with the raw amino-acid sequence, 115 residues long: Large ribosomal subunit protein P1 (115 aa).

Residues glutamine 56–glutamate 73 show a composition bias toward low complexity. Residues glutamine 56 to glycine 115 are disordered. The span at glycine 74–serine 106 shows a compositional bias: acidic residues.

The protein belongs to the eukaryotic ribosomal protein P1/P2 family. Part of the 50S ribosomal subunit. Homodimer, it forms part of the ribosomal stalk which helps the ribosome interact with GTP-bound translation factors. Forms a heptameric uL10/P0(P1)2(P1)2(P1)2 complex, where uL10/P0 forms an elongated spine to which the P1 dimers bind in a sequential fashion.

Functionally, forms part of the ribosomal stalk, playing a central role in the interaction of the ribosome with GTP-bound translation factors. The chain is Large ribosomal subunit protein P1 from Haloarcula marismortui (strain ATCC 43049 / DSM 3752 / JCM 8966 / VKM B-1809) (Halobacterium marismortui).